Reading from the N-terminus, the 372-residue chain is Caytaxin (372 aa).

A disordered region spans residues 1–58 (MGTTEATLRMENVDVRDEWQDEDLPRPLPEDTGVERLGGAVEDSSSPPSTLNLSGAHR). Basic and acidic residues predominate over residues 11-29 (ENVDVRDEWQDEDLPRPLP). The segment covering 43–53 (DSSSPPSTLNL) has biased composition (polar residues). Residue Ser54 is modified to Phosphoserine. The tract at residues 115–120 (ELEWED) is required for interaction with KLC1. The 158-residue stretch at 171–328 (IRPYMKVVTH…CVLQYEEQRL (158 aa)) folds into the CRAL-TRIO domain. The tract at residues 190–372 (AIIVFAACFL…ATEDQETSMS (183 aa)) is mediates interaction with GLS. Positions 329–372 (RAKRESTRPPQPEFLLPRSEEKPETVEEEDRAAEATEDQETSMS) are disordered. A compositionally biased stretch (acidic residues) spans 354–372 (VEEEDRAAEATEDQETSMS).

In terms of assembly, interacts with KLC1; may link mitochondria to KLC1 and regulate mitochondria localization into neuron projections. Interacts with GLS; the interaction is direct and may control GLS localization, negatively regulating its activity. Interacts with PIN1 (via WW domain); upon NGF stimulation. The interaction with PIN1 and GLS is competitive. In terms of processing, cleaved by CASP3 and CASP7. The potential C-terminal product released by CASP3 cleavage may inhibit the ERK signaling pathway through MAP2K2. Post-translationally, may be ubiquitinated by STUB1. In terms of tissue distribution, neuronal tissues specific. Strongly expressed in brain. Expressed in virtually all parts of the adult brain, including cortex, cerebellum and olfactory bulbs. Enriched in hippocampus, cerebellar cortex, deep cerebellar nuclei, and pontine nuclei (at protein level).

It localises to the cell projection. The protein resides in the axon. It is found in the dendrite. The protein localises to the presynapse. Its subcellular location is the mitochondrion. It localises to the growth cone. The protein resides in the cytoplasm. In terms of biological role, functions in the development of neural tissues, particularly the postnatal maturation of the cerebellar cortex. May play a role in neurotransmission through regulation of glutaminase/GLS, an enzyme responsible for the production in neurons of the glutamate neurotransmitter. Alternatively, may regulate the localization of mitochondria within axons and dendrites. In Mus musculus (Mouse), this protein is Caytaxin (Atcay).